The chain runs to 273 residues: Small ribosomal subunit protein uS2 (273 aa).

Residues 244-273 (SDEEANSSAEENENRQEDLLAKKYDSSEAN) form a disordered region. Over residues 255 to 273 (NENRQEDLLAKKYDSSEAN) the composition is skewed to basic and acidic residues.

The protein belongs to the universal ribosomal protein uS2 family.

This chain is Small ribosomal subunit protein uS2, found in Chlamydia felis (strain Fe/C-56) (Chlamydophila felis).